The following is a 445-amino-acid chain: uncharacterized protein (445 aa).

This is an uncharacterized protein from Xanthomonas euvesicatoria.